The chain runs to 424 residues: MLDIKFLRTNFEEVKAKLQHRGEDLTDFGRFEELDTRRRELLVQTEELKSKRNEVSQQISVLKREKKDAEALILEMREVGEKVKDLDNELRTVEEDLERLMLSIPNIPHESAPVGETEDDNVVARTWGEVKEFAFEPKPHWDLATDLGILDFERAGKVTGSRFVFYKGAGARLERALISFMLDLHTDEHGYEEVLPPYMVNRASMTGTGQLPKFEEDAFRIESEDYFLIPTAEVPVTNMHRDEILNKEQLPIRYAAFSSCFRSEAGSAGRDTRGLIRQHQFNKVELVKFVKPEDSYEELEKLTNDAERVLQLLELPYRVMSMCTGDLGFTAAKKYDIEVWIPSYGTYREISSCSNFEAFQARRANIRFRREPNGKPEHVHTLNGSGLAIGRTVAAILENYQQEDGTIIIPEVLRPYMGGKTVIK.

L-serine is bound at residue 231-233 (TAE). 262–264 (RSE) provides a ligand contact to ATP. E285 contributes to the L-serine binding site. ATP is bound at residue 349–352 (EISS). Position 385 (S385) interacts with L-serine.

It belongs to the class-II aminoacyl-tRNA synthetase family. Type-1 seryl-tRNA synthetase subfamily. In terms of assembly, homodimer. The tRNA molecule binds across the dimer.

It localises to the cytoplasm. The enzyme catalyses tRNA(Ser) + L-serine + ATP = L-seryl-tRNA(Ser) + AMP + diphosphate + H(+). It carries out the reaction tRNA(Sec) + L-serine + ATP = L-seryl-tRNA(Sec) + AMP + diphosphate + H(+). It functions in the pathway aminoacyl-tRNA biosynthesis; selenocysteinyl-tRNA(Sec) biosynthesis; L-seryl-tRNA(Sec) from L-serine and tRNA(Sec): step 1/1. Functionally, catalyzes the attachment of serine to tRNA(Ser). Is also able to aminoacylate tRNA(Sec) with serine, to form the misacylated tRNA L-seryl-tRNA(Sec), which will be further converted into selenocysteinyl-tRNA(Sec). In Bacillus anthracis (strain A0248), this protein is Serine--tRNA ligase.